A 441-amino-acid polypeptide reads, in one-letter code: Transcriptional regulatory protein ZraR (441 aa).

Positions 7-121 (DILVVDDDVS…RLQETLEKAL (115 aa)) constitute a Response regulatory domain. The residue at position 56 (aspartate 56) is a 4-aspartylphosphate. The Sigma-54 factor interaction domain occupies 141–370 (MIGSSPAMQH…LENAIERAVV (230 aa)). Positions 172, 173, 329, and 359 each coordinate ATP. Positions 421–440 (KTEAARQLGITRKTLLAKLS) form a DNA-binding region, H-T-H motif.

Phosphorylated by ZraS.

It localises to the cytoplasm. Activity of the ZraS/ZraR two-component system is repressed by the zinc-bound form of ZraP, which probably interacts with the periplasmic region of ZraS. Functionally, part of the Zra signaling pathway, an envelope stress response (ESR) system composed of the periplasmic accessory protein ZraP, the histidine kinase ZraS and the transcriptional regulator ZraR. The ZraPSR system contributes to antibiotic resistance and is important for membrane integrity in the presence of membrane-targeting biocides. ZraR is a member of the two-component regulatory system ZraS/ZraR. When activated by ZraS, acts in conjunction with sigma-54 to regulate the expression of zraP in the presence of high Zn(2+) or Pb(2+) concentrations. Also positively autoregulates the expression of the zraSR operon. The protein is Transcriptional regulatory protein ZraR (zraR) of Salmonella typhi.